Here is a 379-residue protein sequence, read N- to C-terminus: Chaperone protein DnaJ (379 aa).

The region spanning 5–70 (DYYETLGCDR…QKRAAYDRFG (66 aa)) is the J domain. Residues 134–212 (GKTAQIKIPT…CGGAGRVTRE (79 aa)) form a CR-type zinc finger. Zn(2+)-binding residues include C147, C150, C164, C167, C186, C189, C200, and C203. 4 CXXCXGXG motif repeats span residues 147 to 154 (CETCSGTG), 164 to 171 (CRMCGGAG), 186 to 193 (CPNCQGRG), and 200 to 207 (CSDCGGAG).

It belongs to the DnaJ family. Homodimer. Zn(2+) is required as a cofactor.

Its subcellular location is the cytoplasm. Its function is as follows. Participates actively in the response to hyperosmotic and heat shock by preventing the aggregation of stress-denatured proteins and by disaggregating proteins, also in an autonomous, DnaK-independent fashion. Unfolded proteins bind initially to DnaJ; upon interaction with the DnaJ-bound protein, DnaK hydrolyzes its bound ATP, resulting in the formation of a stable complex. GrpE releases ADP from DnaK; ATP binding to DnaK triggers the release of the substrate protein, thus completing the reaction cycle. Several rounds of ATP-dependent interactions between DnaJ, DnaK and GrpE are required for fully efficient folding. Also involved, together with DnaK and GrpE, in the DNA replication of plasmids through activation of initiation proteins. The protein is Chaperone protein DnaJ of Xanthobacter autotrophicus (strain ATCC BAA-1158 / Py2).